Reading from the N-terminus, the 102-residue chain is MPSQKIRIRLKAYDHKLLDVSVGEIVDTAKRTGARVAGPIPLPTVVNKYCVLRGPHVDKKSREQFEIRTHKRLIDILEPTQQTVDALMKLDLSAGVDVEIKL.

Belongs to the universal ribosomal protein uS10 family. In terms of assembly, part of the 30S ribosomal subunit.

Its function is as follows. Involved in the binding of tRNA to the ribosomes. The protein is Small ribosomal subunit protein uS10 of Geotalea daltonii (strain DSM 22248 / JCM 15807 / FRC-32) (Geobacter daltonii).